We begin with the raw amino-acid sequence, 77 residues long: uncharacterized protein (77 aa).

Residues Lys-53–Asp-77 are disordered.

This is an uncharacterized protein from Escherichia coli (strain K12).